The primary structure comprises 873 residues: Programmed cell death 6-interacting protein (873 aa).

Position 2 is an N-acetylalanine (A2). The 395-residue stretch at 3 to 397 (SFIWVQLKKT…AQMREATTLA (395 aa)) folds into the BRO1 domain. An interaction with CHMP4A, CHMP4B and CHMP4C region spans residues 176-508 (TVDISPDTVG…KFRAVLDKAV (333 aa)). K215 carries the post-translational modification N6-acetyllysine. Positions 423-873 (LTKSTAVVEQ…PPQQSYYPQQ (451 aa)) are interaction with SDCBP. T484 is subject to Phosphothreonine. Residue S486 is modified to Phosphoserine. Residues 508-873 (VQADGQVKER…PPQQSYYPQQ (366 aa)) are self-association. Disordered stretches follow at residues 719–808 (AREP…GPPY) and 837–873 (PYPP…YPQQ). An interaction with TSG101 region spans residues 722–725 (PSAP). S735 is modified (phosphoserine). Residues T742 and T745 each carry the phosphothreonine modification. Positions 745–767 (TPAPRTMPPAKPQPPARPPPPVL) are enriched in pro residues. Position 749 is an omega-N-methylarginine (R749). Over residues 768–791 (PANRVPPAAAATAPAGVGTASAAP) the composition is skewed to low complexity. Composition is skewed to pro residues over residues 792 to 808 (PQTP…GPPY) and 849 to 865 (APYP…PQPP). The tract at residues 802-811 (QAQGPPYPTY) is interaction with CEP55.

Self-associates. Interacts with SH3KBP1. Interacts with PDCD6 in a calcium-dependent manner. Interacts with TSG101 in a calcium-dependent manner; PDCD6IP homooligomerization may be required for TSG101-binding. Interacts with SGSM3. Directly interacts with CHMP4A, CHMP4B and CHMP4C. Directly interacts with CEP55 in a 1:2 stoechiometry; this interaction is required for PDCD6IP targeting to the midbody. May interact with PDGFRB. Interacts with SH3GL1 and SH3GL2/endophilin-1. Forms a complex with SDCBP and SDC2. Found in a complex with F-actin, TJP1/ZO-1 and PARD3. Interacts with CD2AP. Interacts with ARRDC1. Interacts (via BRO1 domain) with the ATG12-ATG3 conjugate; this interaction is bridged by ATG12 and promotes multiple PDCD6IP-mediated functions such as endolysosomal trafficking, macroautophagy and exosome biogenesis. In terms of processing, may be phosphorylated on tyrosine residues by activated PDGFRB. As to expression, expressed in astrocytes and glioma cells.

Its subcellular location is the cytoplasm. It is found in the cytosol. It localises to the melanosome. The protein localises to the cytoskeleton. The protein resides in the microtubule organizing center. Its subcellular location is the centrosome. It is found in the secreted. It localises to the extracellular exosome. The protein localises to the cell junction. The protein resides in the tight junction. Its subcellular location is the midbody. It is found in the midbody ring. Its function is as follows. Multifunctional protein involved in endocytosis, multivesicular body biogenesis, membrane repair, cytokinesis, apoptosis and maintenance of tight junction integrity. Class E VPS protein involved in concentration and sorting of cargo proteins of the multivesicular body (MVB) for incorporation into intralumenal vesicles (ILVs) that are generated by invagination and scission from the limiting membrane of the endosome. Binds to the phospholipid lysobisphosphatidic acid (LBPA) which is abundant in MVBs internal membranes. The MVB pathway requires the sequential function of ESCRT-O, -I,-II and -III complexes. The ESCRT machinery also functions in topologically equivalent membrane fission events, such as the terminal stages of cytokinesis. Adapter for a subset of ESCRT-III proteins, such as CHMP4, to function at distinct membranes. Required for completion of cytokinesis. May play a role in the regulation of both apoptosis and cell proliferation. Regulates exosome biogenesis in concert with SDC1/4 and SDCBP. By interacting with F-actin, PARD3 and TJP1 secures the proper assembly and positioning of actomyosin-tight junction complex at the apical sides of adjacent epithelial cells that defines a spatial membrane domain essential for the maintenance of epithelial cell polarity and barrier. This Rattus norvegicus (Rat) protein is Programmed cell death 6-interacting protein.